We begin with the raw amino-acid sequence, 43 residues long: KNYGNGVHCTKKGCSVDWGYAWTNIANNSVMNGLTGGNAGWHN.

Residues C9 and C14 are joined by a disulfide bond.

It localises to the secreted. Inhibits a wide spectrum of lactic acid bacteria. This Leuconostoc mesenteroides protein is Bacteriocin leucocin-C.